A 478-amino-acid polypeptide reads, in one-letter code: Pentraxin-4 (478 aa).

Residues Met-1–Ser-25 form the signal peptide. 2 N-linked (GlcNAc...) asparagine glycosylation sites follow: Asn-67 and Asn-91. Over residues Arg-208 to Pro-222 the composition is skewed to basic and acidic residues. The disordered stretch occupies residues Arg-208–Val-262. One can recognise a Pentraxin (PTX) domain in the interval Val-269–Cys-473. A disulfide bridge connects residues Cys-300 and Cys-364. Residues Asp-322, Asn-323, Glu-406, Gln-407, and Asp-408 each coordinate Ca(2+).

Requires Ca(2+) as cofactor. As to expression, widely expressed at low levels with highest levels in small intestine, testis and brain. Very low expression in endothelial cells, monocytes, neutrophils and lymphocytes. Isoform 1 is not expressed in small intestine.

It is found in the secreted. In Homo sapiens (Human), this protein is Pentraxin-4 (PTX4).